The following is a 61-amino-acid chain: Large ribosomal subunit protein uL30 (61 aa).

This sequence belongs to the universal ribosomal protein uL30 family. As to quaternary structure, part of the 50S ribosomal subunit.

The chain is Large ribosomal subunit protein uL30 from Francisella philomiragia subsp. philomiragia (strain ATCC 25017 / CCUG 19701 / FSC 153 / O#319-036).